Reading from the N-terminus, the 127-residue chain is Large ribosomal subunit protein eL8 (127 aa).

It belongs to the eukaryotic ribosomal protein eL8 family. As to quaternary structure, part of the 50S ribosomal subunit. Probably part of the RNase P complex.

It localises to the cytoplasm. Its function is as follows. Multifunctional RNA-binding protein that recognizes the K-turn motif in ribosomal RNA, the RNA component of RNase P, box H/ACA, box C/D and box C'/D' sRNAs. This Aeropyrum pernix (strain ATCC 700893 / DSM 11879 / JCM 9820 / NBRC 100138 / K1) protein is Large ribosomal subunit protein eL8.